The following is a 40-amino-acid chain: Amyloid-beta precursor protein (40 aa).

It belongs to the APP family. As to quaternary structure, binds, via its C-terminus, to the PID domain of several cytoplasmic proteins, including APBB family members, the APBA family, MAPK8IP1, SHC1 and NUMB and DAB1. Binding to DAB1 inhibits its serine phosphorylation. Interacts (via NPXY motif) with DAB2 (via PID domain); the interaction is impaired by tyrosine phosphorylation of the NPXY motif. Also interacts with GPCR-like protein BPP, APPBP1, IB1, KNS2 (via its TPR domains), APPBP2 (via BaSS) and DDB1. In vitro, it binds MAPT via the MT-binding domains. Associates with microtubules in the presence of ATP and in a kinesin-dependent manner. Interacts, through a C-terminal domain, with GNAO1. Interacts with CPEB1, ANKS1B and AGER. Interacts with ITM2B. Interacts with ITM2C. Interacts with IDE. Can form homodimers; dimerization is enhanced in the presence of Cu(2+) ions. Can form homodimers; this is promoted by heparin binding. Interacts with SORL1 (via N-terminal ectodomain); this interaction retains APP in the trans-Golgi network and reduces processing into soluble APP-alpha and amyloid-beta peptides. Interacts with PLD3. Interacts with VDAC1. Interacts with NSG1; could regulate APP processing. Interacts with LRRK2. Interacts (via cytoplasmic domain) with KIF5B. Interacts (via C-terminus) with APBB2/FE65L1 (via C-terminus). Interacts (via intracellular domain) with APBB3. In terms of processing, proteolytically processed under normal cellular conditions. Cleavage either by alpha-secretase, beta-secretase or theta-secretase leads to generation and extracellular release of soluble APP peptides, S-APP-alpha and S-APP-beta, and the retention of corresponding membrane-anchored C-terminal fragments, C80, C83 and C99. Subsequent processing of C80 and C83 by gamma-secretase yields P3 peptides. This is the major secretory pathway and is non-amyloidogenic. Alternatively, presenilin/nicastrin-mediated gamma-secretase processing of C99 releases the amyloid-beta proteins, amyloid-beta protein 40 and amyloid-beta protein 42, major components of amyloid plaques, and the cytotoxic C-terminal fragments, gamma-CTF(50), gamma-CTF(57) and gamma-CTF(59). PSEN1 cleavage is more efficient with C83 than with C99 as substrate (in vitro). Amyloid-beta protein 40 and Amyloid-beta protein 42 are cleaved by ACE. Many other minor amyloid-beta peptides, amyloid-beta 1-X peptides, are found in cerebral spinal fluid (CSF) including the amyloid-beta X-15 peptides, produced from the cleavage by alpha-secretase.

Its subcellular location is the cell membrane. The protein resides in the membrane. The protein localises to the perikaryon. It localises to the cell projection. It is found in the growth cone. Its subcellular location is the clathrin-coated pit. The protein resides in the early endosome. The protein localises to the cytoplasmic vesicle. Its function is as follows. Functions as a cell surface receptor and performs physiological functions on the surface of neurons relevant to neurite growth, neuronal adhesion and axonogenesis. Interaction between APP molecules on neighboring cells promotes synaptogenesis. Involved in cell mobility and transcription regulation through protein-protein interactions. Can promote transcription activation through binding to APBB1-KAT5 and inhibit Notch signaling through interaction with Numb. Couples to apoptosis-inducing pathways such as those mediated by G(o) and JIP. Inhibits G(o)-alpha ATPase activity. Acts as a kinesin I membrane receptor, mediating the axonal transport of beta-secretase and presenilin 1. May be involved in copper homeostasis/oxidative stress through copper ion reduction. In vitro, copper-metallated APP induces neuronal death directly or is potentiated through Cu(2+)-mediated low-density lipoprotein oxidation. Can regulate neurite outgrowth through binding to components of the extracellular matrix such as heparin and collagen I and IV. Induces a AGER-dependent pathway that involves activation of p38 MAPK, resulting in internalization of amyloid-beta peptide and mitochondrial dysfunction in cultured cortical neurons. Provides Cu(2+) ions for GPC1 which are required for release of nitric oxide (NO) and subsequent degradation of the heparan sulfate chains on GPC1. This chain is Amyloid-beta precursor protein, found in Felis catus (Cat).